The chain runs to 32 residues: Cytochrome b6-f complex subunit 7 (32 aa).

The helical transmembrane segment at 9–27 (AVVFWVLIPVGLAGGALLL) threads the bilayer.

Belongs to the PetM family. The 4 large subunits of the cytochrome b6-f complex are cytochrome b6, subunit IV (17 kDa polypeptide, PetD), cytochrome f and the Rieske protein, while the 4 small subunits are PetG, PetL, PetM and PetN. The complex functions as a dimer.

The protein resides in the cellular thylakoid membrane. Its function is as follows. Component of the cytochrome b6-f complex, which mediates electron transfer between photosystem II (PSII) and photosystem I (PSI), cyclic electron flow around PSI, and state transitions. The protein is Cytochrome b6-f complex subunit 7 of Synechococcus sp. (strain CC9311).